The following is a 392-amino-acid chain: 4-hydroxybenzoate polyprenyltransferase, mitochondrial (392 aa).

The N-terminal 22 residues, 1-22 (MYALRHLRLQSARHFRSSYAAA), are a transit peptide targeting the mitochondrion. The next 9 helical transmembrane spans lie at 90–110 (IGTY…ADAG), 115–135 (LTML…GCTI), 163–183 (FDAI…LVQL), 184–204 (NWQS…YPLM), 207–227 (VTYW…LLGW), 236–256 (LAAC…YDTI), 283–303 (VWLS…GWAC), 307–327 (VPYY…IYSL), and 339–359 (FISN…GTLL). A disordered region spans residues 365–392 (KKQRQSSLTTSTASSYVPALPQKPEVLS). A compositionally biased stretch (polar residues) spans 369-379 (QSSLTTSTASS).

It belongs to the UbiA prenyltransferase family. Mg(2+) serves as cofactor.

Its subcellular location is the mitochondrion inner membrane. It carries out the reaction an all-trans-polyprenyl diphosphate + 4-hydroxybenzoate = a 4-hydroxy-3-(all-trans-polyprenyl)benzoate + diphosphate. It participates in cofactor biosynthesis; ubiquinone biosynthesis. In terms of biological role, catalyzes the prenylation of para-hydroxybenzoate (PHB) with an all-trans polyprenyl group. Mediates the second step in the final reaction sequence of coenzyme Q (CoQ) biosynthesis, which is the condensation of the polyisoprenoid side chain with PHB, generating the first membrane-bound Q intermediate. The protein is 4-hydroxybenzoate polyprenyltransferase, mitochondrial of Drosophila melanogaster (Fruit fly).